Reading from the N-terminus, the 534-residue chain is Peptide chain release factor 3 (534 aa).

Positions 9 to 278 constitute a tr-type G domain; it reads ARRRTFAIIS…FFIEHAPPPQ (270 aa). GTP is bound by residues 18-25, 86-90, and 140-143; these read SHPDAGKT, DTPGH, and NKLD.

Belongs to the TRAFAC class translation factor GTPase superfamily. Classic translation factor GTPase family. PrfC subfamily.

It localises to the cytoplasm. Its function is as follows. Increases the formation of ribosomal termination complexes and stimulates activities of RF-1 and RF-2. It binds guanine nucleotides and has strong preference for UGA stop codons. It may interact directly with the ribosome. The stimulation of RF-1 and RF-2 is significantly reduced by GTP and GDP, but not by GMP. The sequence is that of Peptide chain release factor 3 from Xanthomonas oryzae pv. oryzae (strain PXO99A).